The following is a 337-amino-acid chain: NADH-quinone oxidoreductase subunit H (337 aa).

The next 9 membrane-spanning stretches (helical) occupy residues 9–29, 50–70, 82–102, 115–135, 161–181, 186–206, 245–265, 273–293, and 313–333; these read GIPLAIIAAQSLALIVALLLV, PNVVGAFGLLQSFADLLKFVF, GIFLLAPLVTVVLALSGWAVI, VGILYIFAISSLGVYGVIMAG, IGFVIVCVLMTAGSLNLTAIV, TIWYFIPHLPMFVIFFISALA, SILLMCAMTTILFLGGWLPPI, VPGVIWFLLKVFLVFFMFAMV, and FLPISLFWVVLTAGVLVGFDI.

Belongs to the complex I subunit 1 family. NDH-1 is composed of 14 different subunits. Subunits NuoA, H, J, K, L, M, N constitute the membrane sector of the complex.

It is found in the cell inner membrane. It carries out the reaction a quinone + NADH + 5 H(+)(in) = a quinol + NAD(+) + 4 H(+)(out). In terms of biological role, NDH-1 shuttles electrons from NADH, via FMN and iron-sulfur (Fe-S) centers, to quinones in the respiratory chain. The immediate electron acceptor for the enzyme in this species is believed to be ubiquinone. Couples the redox reaction to proton translocation (for every two electrons transferred, four hydrogen ions are translocated across the cytoplasmic membrane), and thus conserves the redox energy in a proton gradient. This subunit may bind ubiquinone. The polypeptide is NADH-quinone oxidoreductase subunit H (Parvibaculum lavamentivorans (strain DS-1 / DSM 13023 / NCIMB 13966)).